The primary structure comprises 86 residues: Small ribosomal subunit protein bS18 (86 aa).

This sequence belongs to the bacterial ribosomal protein bS18 family. As to quaternary structure, part of the 30S ribosomal subunit. Forms a tight heterodimer with protein bS6.

Binds as a heterodimer with protein bS6 to the central domain of the 16S rRNA, where it helps stabilize the platform of the 30S subunit. This is Small ribosomal subunit protein bS18 from Campylobacter jejuni subsp. jejuni serotype O:6 (strain 81116 / NCTC 11828).